The following is a 166-amino-acid chain: Large ribosomal subunit protein uL10 (166 aa).

Belongs to the universal ribosomal protein uL10 family. In terms of assembly, part of the ribosomal stalk of the 50S ribosomal subunit. The N-terminus interacts with L11 and the large rRNA to form the base of the stalk. The C-terminus forms an elongated spine to which L12 dimers bind in a sequential fashion forming a multimeric L10(L12)X complex.

Functionally, forms part of the ribosomal stalk, playing a central role in the interaction of the ribosome with GTP-bound translation factors. The polypeptide is Large ribosomal subunit protein uL10 (Streptococcus agalactiae serotype V (strain ATCC BAA-611 / 2603 V/R)).